Consider the following 448-residue polypeptide: UPF0210 protein Pisl_0759 (448 aa).

It belongs to the UPF0210 family.

This is UPF0210 protein Pisl_0759 from Pyrobaculum islandicum (strain DSM 4184 / JCM 9189 / GEO3).